The primary structure comprises 374 residues: Ribosomal RNA large subunit methyltransferase G (374 aa).

Belongs to the methyltransferase superfamily. RlmG family.

The protein localises to the cytoplasm. The enzyme catalyses guanosine(1835) in 23S rRNA + S-adenosyl-L-methionine = N(2)-methylguanosine(1835) in 23S rRNA + S-adenosyl-L-homocysteine + H(+). Its function is as follows. Specifically methylates the guanine in position 1835 (m2G1835) of 23S rRNA. The chain is Ribosomal RNA large subunit methyltransferase G from Pseudomonas syringae pv. tomato (strain ATCC BAA-871 / DC3000).